Here is a 320-residue protein sequence, read N- to C-terminus: NAC domain-containing protein 20 (320 aa).

Residues 14–170 (LPPGFRFHPT…DWAVCRIFHK (157 aa)) enclose the NAC domain. The DNA-binding element occupies 114–176 (IGMKKTLVFY…IFHKSSGIKK (63 aa)).

Forms homodimers. Forms heterodimers with NAC26. As to expression, expressed in developing seeds.

It is found in the nucleus. The protein localises to the endoplasmic reticulum. Functionally, transcription factor that acts redundantly with NAC26 to regulate the expression of genes involved in the biosynthesis of starch and storage proteins in grain. Directly binds to the promoters of starch synthase 1 (SS1), pullulanase (PUL), glutelin A1 (GLUA1), glutelins B4 and B5 (GLUB4 and GLUB5), alpha-globulin and 16 kDa prolamin, and activates their expression. Possesses transactivation activity in yeast. The polypeptide is NAC domain-containing protein 20 (Oryza sativa subsp. indica (Rice)).